The chain runs to 959 residues: Translation initiation factor IF-2 (959 aa).

The span at 1-10 (MSDKTNDDKT) shows a compositional bias: basic and acidic residues. A disordered region spans residues 1–374 (MSDKTNDDKT…SQMQETREKI (374 aa)). Positions 27–37 (EQSTVRQNFSH) are enriched in polar residues. Low complexity-rich tracts occupy residues 63–118 (AAAA…VTKP) and 128–138 (QRPGGQQAQRP). Composition is skewed to basic and acidic residues over residues 154 to 225 (SEMD…EAAK) and 232 to 241 (ARSERRDDAR). Residues 246–284 (GARPQQAGRPQGGRPQPAGRPQQGSPRPAPIIADAAPIA) show a composition bias toward low complexity. Residues 318 to 333 (PEVRAPKVVKGEDDRR) show a composition bias toward basic and acidic residues. One can recognise a tr-type G domain in the interval 457–626 (SRPPVVTIMG…LLQAEMLDLK (170 aa)). Positions 466-473 (GHVDHGKT) are G1. 466–473 (GHVDHGKT) provides a ligand contact to GTP. Positions 491 to 495 (GITQH) are G2. A G3 region spans residues 512–515 (DTPG). GTP-binding positions include 512 to 516 (DTPGH) and 566 to 569 (NKID). The G4 stretch occupies residues 566–569 (NKID). The segment at 602-604 (SAK) is G5.

The protein belongs to the TRAFAC class translation factor GTPase superfamily. Classic translation factor GTPase family. IF-2 subfamily.

It is found in the cytoplasm. In terms of biological role, one of the essential components for the initiation of protein synthesis. Protects formylmethionyl-tRNA from spontaneous hydrolysis and promotes its binding to the 30S ribosomal subunits. Also involved in the hydrolysis of GTP during the formation of the 70S ribosomal complex. In Brucella abortus (strain 2308), this protein is Translation initiation factor IF-2.